The following is a 134-amino-acid chain: UPF0412 protein YaaI (134 aa).

Residues 1 to 23 (MKSVFTISASLAISLMLCCTAQA) form the signal peptide.

This sequence belongs to the UPF0412 family.

The protein is UPF0412 protein YaaI of Escherichia coli (strain ATCC 8739 / DSM 1576 / NBRC 3972 / NCIMB 8545 / WDCM 00012 / Crooks).